A 496-amino-acid chain; its full sequence is Probable cytosol aminopeptidase (496 aa).

Mn(2+) contacts are provided by lysine 258 and aspartate 263. Lysine 270 is an active-site residue. 3 residues coordinate Mn(2+): aspartate 281, aspartate 340, and glutamate 342. Arginine 344 is an active-site residue.

This sequence belongs to the peptidase M17 family. Mn(2+) is required as a cofactor.

It is found in the cytoplasm. It carries out the reaction Release of an N-terminal amino acid, Xaa-|-Yaa-, in which Xaa is preferably Leu, but may be other amino acids including Pro although not Arg or Lys, and Yaa may be Pro. Amino acid amides and methyl esters are also readily hydrolyzed, but rates on arylamides are exceedingly low.. The catalysed reaction is Release of an N-terminal amino acid, preferentially leucine, but not glutamic or aspartic acids.. Presumably involved in the processing and regular turnover of intracellular proteins. Catalyzes the removal of unsubstituted N-terminal amino acids from various peptides. The sequence is that of Probable cytosol aminopeptidase from Helicobacter pylori (strain HPAG1).